We begin with the raw amino-acid sequence, 445 residues long: Deoxyribodipyrimidine photo-lyase (445 aa).

The region spanning serine 20–valine 148 is the Photolyase/cryptochrome alpha/beta domain. Arginine 239 contributes to the DNA binding site.

Belongs to the DNA photolyase class-2 family. Requires FAD as cofactor. It depends on coenzyme F420-(gamma-Glu)n as a cofactor.

The catalysed reaction is cyclobutadipyrimidine (in DNA) = 2 pyrimidine residues (in DNA).. Involved in repair of UV radiation-induced DNA damage. Catalyzes the light-dependent monomerization (300-600 nm) of cyclobutyl pyrimidine dimers (in cis-syn configuration), which are formed between adjacent bases on the same DNA strand upon exposure to ultraviolet radiation. This chain is Deoxyribodipyrimidine photo-lyase (phr), found in Methanothermobacter thermautotrophicus (strain ATCC 29096 / DSM 1053 / JCM 10044 / NBRC 100330 / Delta H) (Methanobacterium thermoautotrophicum).